The following is a 424-amino-acid chain: MMTDPLSRSHAAALDAADPLRALRDAFVFPQHGGQDQTYFVGNSLGLQPRQARAMVSEVLDQWGALAVEGHFTGPTQWLTYHQLVRDGLARVVGAQPDEVVAMNTLTVNLHLMMASFYRPSAERAAILIEAGAFPSDRHAVESQLRLHGLDPDTHLIEVEPDAADGTLSMDAIAATIAQHGPRLALVLWPGIQYRTGQAFALGEIARLARAQGAAVGFDLAHAVGNIPLSLHDDGVDFAVWCHYKYLNAGPGAVGGCFVHARHAHSNLPRMAGWWGHEQPTRFRMEPQFVPSPGAEGWQLSNPPVLALAPLRASLELFDQAGMPALRAKSEQLTGHLEQLIHTRVPQVLQIVTPADPAQRGCQLSLRVAGGRTQGRALFEYLQSVGVLGDWREPDVIRIAPVPLYNRFCDLHQLVEHVETWAAA.

Pyridoxal 5'-phosphate contacts are provided by residues Leu106, Thr107, 134–137, Asp219, His222, and Tyr244; that span reads FPSD. Position 245 is an N6-(pyridoxal phosphate)lysine (Lys245). 2 residues coordinate pyridoxal 5'-phosphate: Trp274 and Asn302.

This sequence belongs to the kynureninase family. As to quaternary structure, homodimer. The cofactor is pyridoxal 5'-phosphate.

It carries out the reaction L-kynurenine + H2O = anthranilate + L-alanine + H(+). It catalyses the reaction 3-hydroxy-L-kynurenine + H2O = 3-hydroxyanthranilate + L-alanine + H(+). It participates in amino-acid degradation; L-kynurenine degradation; L-alanine and anthranilate from L-kynurenine: step 1/1. It functions in the pathway cofactor biosynthesis; NAD(+) biosynthesis; quinolinate from L-kynurenine: step 2/3. Functionally, catalyzes the cleavage of L-kynurenine (L-Kyn) and L-3-hydroxykynurenine (L-3OHKyn) into anthranilic acid (AA) and 3-hydroxyanthranilic acid (3-OHAA), respectively. The sequence is that of Kynureninase from Xanthomonas campestris pv. campestris (strain 8004).